The chain runs to 363 residues: Insulin gene enhancer protein ISL-3 (363 aa).

2 LIM zinc-binding domains span residues 27–80 and 89–143; these read CVGC…CKRD and CAKC…RADH. Residues 191–250 constitute a DNA-binding region (homeobox); sequence TTRVRTVLNEKQLHTLRTCYNANPRPDALMREQLVEMTGLSPRVIRVWFQNKRCKDKKRS. Residues 328-363 are disordered; the sequence is FSESGSLGNSSGSDVTSLSSHLPDTPNSMVPSPVET. The segment covering 329–340 has biased composition (low complexity); sequence SESGSLGNSSGS. The span at 341 to 363 shows a compositional bias: polar residues; that stretch reads DVTSLSSHLPDTPNSMVPSPVET.

Its subcellular location is the nucleus. Its function is as follows. Binds to one of the cis-acting domain of the insulin gene enhancer. May be involved in subtype specialization of primary motoneurons. The polypeptide is Insulin gene enhancer protein ISL-3 (isl3) (Oncorhynchus tshawytscha (Chinook salmon)).